A 465-amino-acid polypeptide reads, in one-letter code: Putative multidrug resistance protein MdtD (465 aa).

The next 12 helical transmembrane spans lie at 12 to 32, 49 to 69, 72 to 92, 138 to 158, 165 to 185, 195 to 215, 219 to 239, 267 to 287, 290 to 310, 329 to 351, 393 to 413, and 430 to 450; these read LWIVAFGFFMQTLDTTIVNTA, SVIVSYVLTVAVMLPASGWLA, IGVKWVFFSAIILFTFGSLMC, FVTLPGQIGPLVGPALGGFLV, WIFLINLPVGVIGALATLLLM, FDISGFIMLAIGMATLTLALD, GLGLSPLAIAGLILCGVIALG, LVGSMSARIGSGMLPFMTPIF, IGLGFSPFHAGLMMIPMIIGS, VLVNATLLLAVVSLSLPLVAIMG, LLSMAMQLSMSIGVSTAGILL, and SAFLYSYLCMAIIIALPALIF.

This sequence belongs to the major facilitator superfamily. TCR/Tet family.

The protein localises to the cell inner membrane. The polypeptide is Putative multidrug resistance protein MdtD (Yersinia pseudotuberculosis serotype I (strain IP32953)).